The sequence spans 365 residues: Chorismate synthase (365 aa).

Residue Arg46 participates in NADP(+) binding. Residues 123 to 125 (RSS), 241 to 242 (NG), Gly281, 296 to 300 (KPTPS), and Arg322 each bind FMN.

Belongs to the chorismate synthase family. In terms of assembly, homotetramer. FMNH2 serves as cofactor.

The catalysed reaction is 5-O-(1-carboxyvinyl)-3-phosphoshikimate = chorismate + phosphate. The protein operates within metabolic intermediate biosynthesis; chorismate biosynthesis; chorismate from D-erythrose 4-phosphate and phosphoenolpyruvate: step 7/7. Catalyzes the anti-1,4-elimination of the C-3 phosphate and the C-6 proR hydrogen from 5-enolpyruvylshikimate-3-phosphate (EPSP) to yield chorismate, which is the branch point compound that serves as the starting substrate for the three terminal pathways of aromatic amino acid biosynthesis. This reaction introduces a second double bond into the aromatic ring system. The chain is Chorismate synthase from Helicobacter pylori (strain J99 / ATCC 700824) (Campylobacter pylori J99).